The following is a 1001-amino-acid chain: Transcription-repair-coupling factor (1001 aa).

The region spanning 499-658 (DLSSHRVMDR…LSQIKGISSL (160 aa)) is the Helicase ATP-binding domain. Residue 512–519 (GDVGFGKT) coordinates ATP. The DEEH box signature appears at 611-614 (DEEH). The Helicase C-terminal domain occupies 679–835 (LLKEIIYREL…SIAYHDLEIR (157 aa)).

It in the N-terminal section; belongs to the UvrB family. The protein in the C-terminal section; belongs to the helicase family. RecG subfamily.

Its subcellular location is the cytoplasm. In terms of biological role, couples transcription and DNA repair by recognizing RNA polymerase (RNAP) stalled at DNA lesions. Mediates ATP-dependent release of RNAP and its truncated transcript from the DNA, and recruitment of nucleotide excision repair machinery to the damaged site. The chain is Transcription-repair-coupling factor from Helicobacter pylori (strain J99 / ATCC 700824) (Campylobacter pylori J99).